A 136-amino-acid chain; its full sequence is Histone H3 (136 aa).

The tract at residues 1–43 is disordered; sequence MARTKQTARKSTGGKAPRKQLATKAARKSAPASGGVKKPHRFR. At Lys5 the chain carries N6-methylated lysine. An N6-acetyllysine; alternate modification is found at Lys10. The residue at position 10 (Lys10) is an N6-methylated lysine; alternate. Ser11 is modified (phosphoserine). Position 12 is a phosphothreonine (Thr12). Lys15 is subject to N6-acetyllysine. N6-acetyllysine; alternate occurs at positions 19 and 24. Lys19 and Lys24 each carry N6-methylated lysine; alternate. Lys28 is modified (N6-methylated lysine). A Phosphoserine modification is found at Ser29. Residue Lys37 is modified to N6-methylated lysine.

The protein belongs to the histone H3 family. As to quaternary structure, the nucleosome is a histone octamer containing two molecules each of H2A, H2B, H3 and H4 assembled in one H3-H4 heterotetramer and two H2A-H2B heterodimers. The octamer wraps approximately 147 bp of DNA. Acetylation is generally linked to gene activation. Can be acetylated to form H3K9ac, H3K14ac, H3K18ac and H3K23ac. H3K9ac could compete with H3K9me and prevent gene silencing. H3K9ac is restricted to euchromatin. Post-translationally, methylated to form mainly H3K4me, H3K9me, H3K18me, H3K23me, H3K27me and H3K36me. H3K4me1/2/3, H3K9me3, H3K27me3 and H3K36me1/2/3 are typical marks for euchromatin, whereas heterochromatic chromocenters are enriched in H3K9me1/2 and H3K27me1/2. H2BK143ub1 is probably prerequisite for H3K4me. In terms of processing, can be phosphorylated to form H3S10ph, H3T11ph and H3S28ph.

Its subcellular location is the nucleus. It localises to the chromosome. Its function is as follows. Core component of nucleosome. Nucleosomes wrap and compact DNA into chromatin, limiting DNA accessibility to the cellular machineries which require DNA as a template. Histones thereby play a central role in transcription regulation, DNA repair, DNA replication and chromosomal stability. DNA accessibility is regulated via a complex set of post-translational modifications of histones, also called histone code, and nucleosome remodeling. The chain is Histone H3 from Griffithsia japonica (Red alga).